Consider the following 606-residue polypeptide: Melanoma-associated antigen D2 (606 aa).

Residues 1-204 form a disordered region; the sequence is MSDTSESGAG…QASGTTGGRR (204 aa). Residue Ser-2 is modified to N-acetylserine. At Ser-5 the chain carries Phosphoserine. Polar residues predominate over residues 24–37; the sequence is SSMMQTLLTVTQNV. Thr-72 is modified (phosphothreonine). Polar residues predominate over residues 81-93; it reads TQASSTTQLTDTQ. Positions 122–131 are enriched in basic and acidic residues; sequence ETKKVSHVAD. The span at 142–164 shows a compositional bias: low complexity; the sequence is EAAPSQAPADEPEPESAAAQSQE. At Ser-157 the chain carries Phosphoserine. Over residues 171-181 the composition is skewed to basic residues; it reads KVKAKKARKVK. Phosphoserine is present on residues Ser-190, Ser-191, Ser-194, Ser-197, Ser-244, and Ser-247. The span at 248–260 shows a compositional bias: basic residues; the sequence is PKARRGKARRRAA. A disordered region spans residues 248-275; that stretch reads PKARRGKARRRAAKLQSSQEPEAPPPRD. 2 positions are modified to phosphoserine: Ser-264 and Ser-265. The MAGE domain occupies 279-478; the sequence is LQGRANDLVK…KEWAAQYREA (200 aa). Positions 534–563 are disordered; sequence GAEAKAKAQESGSASTGASTSTNNSASASA.

In terms of assembly, interacts with GNAS. May interact with DNAJB1. As to expression, widely expressed. In the developing and adult kidney, expressed in the thick ascending limb of the loop of Henle and the distal convoluted tubules outside the loop.

Functionally, regulates the expression, localization to the plasma membrane and function of the sodium chloride cotransporters SLC12A1 and SLC12A3, two key components of salt reabsorption in the distal renal tubule. This chain is Melanoma-associated antigen D2 (MAGED2), found in Homo sapiens (Human).